The sequence spans 187 residues: Cytochrome b-245 chaperone 1 (187 aa).

A helical transmembrane segment spans residues 20–42 (GIRSWSLLVGILSIGLAAAYYSG). Position 168 is a phosphoserine (Ser-168).

The protein belongs to the CYBC1 family. Interacts with CYBB; CYBC1 may act as a chaperone stabilizing Cytochrome b-245 heterodimer. As to expression, highly expressed in macrophages, neutrophils and monocytes.

The protein resides in the endoplasmic reticulum membrane. In terms of biological role, functions as a chaperone necessary for a stable expression of the CYBA and CYBB subunits of the cytochrome b-245 heterodimer. Controls the phagocyte respiratory burst and is essential for innate immunity. The polypeptide is Cytochrome b-245 chaperone 1 (Homo sapiens (Human)).